The chain runs to 760 residues: BMP/retinoic acid-inducible neural-specific protein 1 (760 aa).

A signal peptide spans 1-16; that stretch reads MNWRFVELLYFLFVWG. The 184-residue stretch at 68-251 folds into the MACPF domain; it reads RYKIYREFAR…FVQSALSYIM (184 aa). N-linked (GlcNAc...) asparagine glycosylation is found at asparagine 156, asparagine 433, asparagine 443, asparagine 553, asparagine 599, asparagine 630, and asparagine 676.

This sequence belongs to the BRINP family. Expressed in brain. Expressed in GABAergic neurons of the pre-frontal cortex. Weakly expressed in embryonic stem (ES) cells and in ES-derived neural stem cells (NSCs).

The protein localises to the cytoplasm. Plays a role in neurogenesis, brain development, and the functioning of GABAergic neurons. May suppress cell cycle progression in postmitotic neurons by inhibiting G1/S transition. In Mus musculus (Mouse), this protein is BMP/retinoic acid-inducible neural-specific protein 1 (Brinp1).